We begin with the raw amino-acid sequence, 1069 residues long: Calcium-transporting ATPase 10, plasma membrane-type (1069 aa).

A disordered region spans residues 1–29 (MSGQFNNSPRGEDKDVEAGTSSFTEYEDS). An N-acetylserine modification is found at Ser2. The Cytoplasmic segment spans residues 2–180 (SGQFNNSPRG…NTYPQKKGRS (179 aa)). The tract at residues 42–53 (ERLRRWRQAALV) is interaction with calmodulin. The helical transmembrane segment at 181–201 (FWRFVWEASQDLTLIILIVAA) threads the bilayer. Residues 202-219 (VASLALGIKTEGIEKGWY) lie on the Lumenal side of the membrane. The chain crosses the membrane as a helical span at residues 220-240 (DGISIAFAVLLVIVVTATSDY). The Cytoplasmic segment spans residues 241–369 (RQSLQFQNLN…GGETPLQVRL (129 aa)). The helical transmembrane segment at 370-389 (NGVATFIGIVGLTVAGVVLF) threads the bilayer. The Lumenal segment spans residues 390–426 (VLVVRYFTGHTKNEQGGPQFIGGKTKFEHVLDDLVEI). The chain crosses the membrane as a helical span at residues 427–444 (FTVAVTIVVVAVPEGLPL). At 445–844 (AVTLTLAYSM…RWGRSVYANI (400 aa)) the chain is on the cytoplasmic side. Catalysis depends on Asp482, which acts as the 4-aspartylphosphate intermediate. The Mg(2+) site is built by Asp789 and Asp793. The chain crosses the membrane as a helical span at residues 845–863 (QKFIQFQLTVNVAALVINV). Residues 864–874 (VAAISAGEVPL) are Lumenal-facing. A helical transmembrane segment spans residues 875 to 895 (TAVQLLWVNLIMDTLGALALA). Residues 896–915 (TEPPTDHLMDRAPVGRREPL) are Cytoplasmic-facing. Residues 916 to 938 (ITNIMWRNLFIQAMYQVTVLLIL) form a helical membrane-spanning segment. At 939-951 (NFRGISILHLKSK) the chain is on the lumenal side. A helical membrane pass occupies residues 952–973 (PNAERVKNTVIFNAFVICQVFN). Topologically, residues 974-991 (EFNARKPDEINIFRGVLR) are cytoplasmic. Residues 992–1013 (NHLFVGIISITIVLQVVIVEFL) traverse the membrane as a helical segment. Residues 1014 to 1023 (GTFASTTKLD) are Lumenal-facing. A helical transmembrane segment spans residues 1024-1045 (WEMWLVCIGIGSISWPLAVIGK). At 1046–1069 (LIPVPETPVSQYFRINRWRRNSSG) the chain is on the cytoplasmic side.

Belongs to the cation transport ATPase (P-type) (TC 3.A.3) family. Type IIB subfamily.

It localises to the membrane. It carries out the reaction Ca(2+)(in) + ATP + H2O = Ca(2+)(out) + ADP + phosphate + H(+). With respect to regulation, activated by calmodulin. This magnesium-dependent enzyme catalyzes the hydrolysis of ATP coupled with the translocation of calcium from the cytosol into the endoplasmic reticulum. This is Calcium-transporting ATPase 10, plasma membrane-type (ACA10) from Arabidopsis thaliana (Mouse-ear cress).